A 461-amino-acid chain; its full sequence is Serine incorporator 5 (461 aa).

Residues 1-36 (MSARCCAGQLACCCGSAGCSLCCGCCPKFRQSRTTR) are Extracellular-facing. Residues 37–57 (FMYLFYFILVIALCCVMMTPS) form a helical membrane-spanning segment. Topologically, residues 58–90 (VMKQVKDHIPFFEEFCKKTQAGGDACENLVGYS) are cytoplasmic. The chain crosses the membrane as a helical span at residues 91-111 (AVYRVCFGMACFFALFCLLTL). The Extracellular segment spans residues 112-125 (KVNNSKSCRAYIHN). The N-linked (GlcNAc...) asparagine glycan is linked to Asn114. Residues 126 to 146 (GFWFFKLLLLGAMCSGAFFIP) form a helical membrane-spanning segment. Residues 147-157 (DQETFLKVWRY) lie on the Cytoplasmic side of the membrane. A helical transmembrane segment spans residues 158–178 (VGAGGSFLFICIQLLLIVQFA). Residues 179–200 (HKWNKNWTAGTVRNKLWYASLS) are Extracellular-facing. A glycan (N-linked (GlcNAc...) asparagine) is linked at Asn184. The chain crosses the membrane as a helical span at residues 201–221 (LVTLIMYSVAVGGLALMAVFY). Over 222-231 (TQWDDCMDNK) the chain is Cytoplasmic. The helical transmembrane segment at 232–252 (ILLGVHGGLCVLISLVAISPC) threads the bilayer. The Extracellular portion of the chain corresponds to 253-260 (VQNRQPHS). A helical transmembrane segment spans residues 261–281 (GLLQSGLISCYVTYLTFSALT). The Cytoplasmic portion of the chain corresponds to 282–312 (SKPEKKVLDEHGKNVTICAPDFGQDLHRDEN). A helical transmembrane segment spans residues 313-333 (MVTWLGTLLLIVCISYSCLTS). Residues 334 to 392 (TTRSSSDALQSRYGAPELEVARCCFCFGPDGEDTEEQQNVKKGPRVIYDEKKGTVYSYS) are Extracellular-facing. Residues 393 to 413 (YFHFVFFLASLYVMMTLTSWF) form a helical membrane-spanning segment. Topologically, residues 414–422 (HYENATIKT) are cytoplasmic. A helical membrane pass occupies residues 423–443 (FFSGWSVFWVKMASCWMCVLL). Residues 444 to 461 (YLQTLVAPLCCPSRQFSV) lie on the Extracellular side of the membrane.

Belongs to the TDE1 family.

It is found in the cell membrane. The enzyme catalyses a 1,2-diacyl-sn-glycero-3-phospho-L-serine(in) = a 1,2-diacyl-sn-glycero-3-phospho-L-serine(out). It carries out the reaction a 1,2-diacyl-sn-glycero-3-phosphocholine(in) = a 1,2-diacyl-sn-glycero-3-phosphocholine(out). It catalyses the reaction a 1,2-diacyl-sn-glycero-3-phosphoethanolamine(in) = a 1,2-diacyl-sn-glycero-3-phosphoethanolamine(out). Its function is as follows. Restriction factor required to restrict infectivity of gammaretroviruses: acts by inhibiting an early step of viral infection. Impairs the penetration of the viral particle into the cytoplasm. Non-ATP-dependent, non-specific lipid transporter for phosphatidylserine, phosphatidylcholine, and phosphatidylethanolamine. Functions as a scramblase that flips lipids in both directions across the membrane. Phospholipid scrambling results in gammaretroviral surface exposure of phosphatidylserine and loss of membrane asymmetry, which leads to loss of infectivity. Enhances the incorporation of serine into phosphatidylserine and sphingolipids. May play a role in providing serine molecules for the formation of myelin glycosphingolipids in oligodendrocytes. This chain is Serine incorporator 5 (Serinc5), found in Mus musculus (Mouse).